A 447-amino-acid chain; its full sequence is GTPase Der (447 aa).

EngA-type G domains lie at 3–167 (PVIA…FAER) and 181–354 (TRIA…AAAM). Residues 9-16 (GRPNVGKS), 56-60 (DTGGF), 119-122 (NKAE), 187-194 (GRPNVGKS), 234-238 (DTAGL), and 299-302 (NKWD) contribute to the GTP site. A KH-like domain is found at 355–439 (VKLPTPKLTR…PLRIEFRTNK (85 aa)).

Belongs to the TRAFAC class TrmE-Era-EngA-EngB-Septin-like GTPase superfamily. EngA (Der) GTPase family. Associates with the 50S ribosomal subunit.

Functionally, GTPase that plays an essential role in the late steps of ribosome biogenesis. The protein is GTPase Der of Ralstonia pickettii (strain 12J).